A 335-amino-acid chain; its full sequence is MRN complex-interacting protein (335 aa).

Disordered stretches follow at residues 75 to 102 (EEAV…PSKP) and 118 to 194 (QELD…ALST). Ser-100 is subject to Phosphoserine. Residues 129 to 142 (TQLSTSAERPSSPA) show a composition bias toward polar residues. The Nuclear localization signal (NLS) signature appears at 145–148 (RKRK). Positions 177–194 (STGLFGTEQQGTSPALST) are enriched in polar residues. Residues 203–230 (FPRWKLPSPVTQVNAPSSKWARFLLAPG) form a necessary for the association with the MRN complex region. The tract at residues 273–335 (RPPQAIHTTT…TTGEDFDDDL (63 aa)) is disordered. Positions 286 to 297 (DRPDRKTREQPR) are enriched in basic and acidic residues.

The protein belongs to the MRNIP family. Associates with the MRE11-RAD50-NBN (MRN) damage-sensing complex; this association is constitutive. Interacts with MRE11. Interacts with NBN. Interacts with RAD50. Post-translationally, phosphorylated; phosphorylation is constitutive and occurs in the absence of any DNA-damaging stimulus. Phosphorylation is necessary for its nuclear retention.

The protein resides in the nucleus. It localises to the nucleoplasm. Functionally, plays a role in the cellular response to DNA damage and the maintenance of genome stability through its association with the MRN damage-sensing complex. Promotes chromatin loading and activity of the MRN complex to facilitate subsequent ATM-mediated DNA damage response signaling and DNA repair. This chain is MRN complex-interacting protein, found in Mus musculus (Mouse).